A 274-amino-acid chain; its full sequence is NH(3)-dependent NAD(+) synthetase (274 aa).

46–53 (GISGGQDS) contributes to the ATP binding site. Asp-52 contributes to the Mg(2+) binding site. Arg-140 contacts deamido-NAD(+). Thr-160 is a binding site for ATP. Glu-165 is a binding site for Mg(2+). Positions 173 and 180 each coordinate deamido-NAD(+). Residues Lys-189 and Thr-211 each contribute to the ATP site. Deamido-NAD(+) is bound at residue 260–261 (HK).

The protein belongs to the NAD synthetase family. In terms of assembly, homodimer.

The catalysed reaction is deamido-NAD(+) + NH4(+) + ATP = AMP + diphosphate + NAD(+) + H(+). It participates in cofactor biosynthesis; NAD(+) biosynthesis; NAD(+) from deamido-NAD(+) (ammonia route): step 1/1. Catalyzes the ATP-dependent amidation of deamido-NAD to form NAD. Uses ammonia as a nitrogen source. This is NH(3)-dependent NAD(+) synthetase from Streptococcus pyogenes serotype M1.